The primary structure comprises 520 residues: Interferon lambda receptor 1 (520 aa).

An N-terminal signal peptide occupies residues 1–20 (MAGPERWGPLLLCLLQAAPG). At 21–228 (RPRLAPPQNV…LLEVPEANWA (208 aa)) the chain is on the extracellular side. The 101-residue stretch at 26 to 126 (PPQNVTLLSQ…LDYLFEVEPA (101 aa)) folds into the Fibronectin type-III domain. N29 and N36 each carry an N-linked (GlcNAc...) asparagine glycan. 2 disulfides stabilise this stretch: C74/C82 and C86/C150. N142 and N169 each carry an N-linked (GlcNAc...) asparagine glycan. C195 and C217 form a disulfide bridge. The chain crosses the membrane as a helical span at residues 229 to 249 (FLVLPSLLILLLVIAAGGVIW). The Cytoplasmic segment spans residues 250–520 (KTLMGNPWFQ…GRTLGHYMAR (271 aa)). Disordered stretches follow at residues 302–439 (VRPT…FLEE) and 477–520 (ESSP…YMAR). Residues 323-336 (AEDEEEEDEEDTED) are compositionally biased toward acidic residues. A compositionally biased stretch (low complexity) spans 380–392 (SSAWDSSDRSWAS). Over residues 479-495 (SPEEEEEARESEIEDSD) the composition is skewed to acidic residues.

This sequence belongs to the type II cytokine receptor family. Heterodimer with IL10RB. In terms of processing, ubiquitinated by FBXO45-containing E3 ligase leading to proteasomal degradation. In terms of tissue distribution, widely expressed.

Its subcellular location is the membrane. Its function is as follows. The IFNLR1/IL10RB dimer is a receptor for the cytokine ligands IFNL2 and IFNL3 and mediates their antiviral activity. The ligand/receptor complex stimulate the activation of the JAK/STAT signaling pathway leading to the expression of IFN-stimulated genes (ISG), which contribute to the antiviral state. Determines the cell type specificity of the lambda interferon action. Shows a more restricted pattern of expression in the epithelial tissues thereby limiting responses to lambda interferons primarily to epithelial cells of the respiratory, gastrointestinal, and reproductive tracts. Seems not to be essential for early virus-activated host defense in vaginal infection, but plays an important role in Toll-like receptor (TLR)-induced antiviral defense. Plays a significant role in the antiviral immune defense in the intestinal epithelium. The chain is Interferon lambda receptor 1 (IFNLR1) from Homo sapiens (Human).